Reading from the N-terminus, the 432-residue chain is Sensor histidine kinase YrkQ (432 aa).

Topologically, residues 1–12 (MAHLKFTLTKKL) are cytoplasmic. A helical membrane pass occupies residues 13-33 (ALLIMVAAIVSGVIFLTLQKI). At 34-145 (TDDLIEGYLS…GFYSSRYYDL (112 aa)) the chain is on the extracellular side. Residues 146 to 166 (AFALDLLGATLIFLIIVLFGI) traverse the membrane as a helical segment. In terms of domain architecture, HAMP spans 167 to 219 (RQSLRYLKTIHQEIHILEGGELDYEMTIKGHDELAMIAKSIEDLRKAFLDKLK). The Cytoplasmic segment spans residues 167–432 (RQSLRYLKTI…IVLRFWNTKM (266 aa)). The region spanning 234-432 (EMSHDMRTPL…IVLRFWNTKM (199 aa)) is the Histidine kinase domain. At His-237 the chain carries Phosphohistidine; by autocatalysis.

The protein resides in the cell membrane. It catalyses the reaction ATP + protein L-histidine = ADP + protein N-phospho-L-histidine.. Its function is as follows. Member of the two-component regulatory system YrkQ/YrkP. Probably activates YrkP by phosphorylation. The sequence is that of Sensor histidine kinase YrkQ (yrkQ) from Bacillus subtilis (strain 168).